The sequence spans 190 residues: Glutathione peroxidase 2 (190 aa).

The active site involves Sec40. Sec40 is a non-standard amino acid (selenocysteine).

The protein belongs to the glutathione peroxidase family. As to quaternary structure, homotetramer. Mucosal epithelium of the gastrointestinal tract.

It localises to the cytoplasm. The protein resides in the cytosol. It catalyses the reaction 2 glutathione + H2O2 = glutathione disulfide + 2 H2O. It carries out the reaction a hydroperoxy polyunsaturated fatty acid + 2 glutathione = a hydroxy polyunsaturated fatty acid + glutathione disulfide + H2O. The enzyme catalyses tert-butyl hydroperoxide + 2 glutathione = tert-butanol + glutathione disulfide + H2O. The catalysed reaction is cumene hydroperoxide + 2 glutathione = 2-phenylpropan-2-ol + glutathione disulfide + H2O. It catalyses the reaction (13S)-hydroperoxy-(9Z,11E)-octadecadienoate + 2 glutathione = (13S)-hydroxy-(9Z,11E)-octadecadienoate + glutathione disulfide + H2O. It carries out the reaction (5S)-hydroperoxy-(6E,8Z,11Z,14Z)-eicosatetraenoate + 2 glutathione = (5S)-hydroxy-(6E,8Z,11Z,14Z)-eicosatetraenoate + glutathione disulfide + H2O. The enzyme catalyses (12R)-hydroperoxy-(5Z,8Z,10E,14Z)-eicosatetraenoate + 2 glutathione = (12R)-hydroxy-(5Z,8Z,10E,14Z)-eicosatetraenoate + glutathione disulfide + H2O. The catalysed reaction is (15S)-hydroperoxy-(5Z,8Z,11Z,13E)-eicosatetraenoate + 2 glutathione = (15S)-hydroxy-(5Z,8Z,11Z,13E)-eicosatetraenoate + glutathione disulfide + H2O. Functionally, catalyzes the reduction of hydroperoxides in a glutathione-dependent manner thus regulating cellular redox homeostasis. Can reduce small soluble hydroperoxide such as H2O2. Can reduce cumene hydroperoxide and tert-butyl hydroperoxide, as well as several fatty acid-derived hydroperoxides. Cannot reduce phosphatidycholine hydroperoxide. The sequence is that of Glutathione peroxidase 2 (Gpx2) from Rattus norvegicus (Rat).